Reading from the N-terminus, the 404-residue chain is Cysteine desulfurase IscS (404 aa).

Pyridoxal 5'-phosphate contacts are provided by residues 75-76 (AT), asparagine 155, glutamine 183, and 203-205 (SAH). Lysine 206 bears the N6-(pyridoxal phosphate)lysine mark. Threonine 243 is a pyridoxal 5'-phosphate binding site. Residue cysteine 328 is the Cysteine persulfide intermediate of the active site. Residue cysteine 328 participates in [2Fe-2S] cluster binding.

This sequence belongs to the class-V pyridoxal-phosphate-dependent aminotransferase family. NifS/IscS subfamily. As to quaternary structure, homodimer. Forms a heterotetramer with IscU, interacts with other sulfur acceptors. Pyridoxal 5'-phosphate serves as cofactor.

It localises to the cytoplasm. It carries out the reaction (sulfur carrier)-H + L-cysteine = (sulfur carrier)-SH + L-alanine. It functions in the pathway cofactor biosynthesis; iron-sulfur cluster biosynthesis. Master enzyme that delivers sulfur to a number of partners involved in Fe-S cluster assembly, tRNA modification or cofactor biosynthesis. Catalyzes the removal of elemental sulfur atoms from cysteine to produce alanine. Functions as a sulfur delivery protein for Fe-S cluster synthesis onto IscU, an Fe-S scaffold assembly protein, as well as other S acceptor proteins. The chain is Cysteine desulfurase IscS from Pseudomonas fluorescens (strain SBW25).